The following is a 380-amino-acid chain: Erythronate-4-phosphate dehydrogenase (380 aa).

Positions 45 and 66 each coordinate substrate. Asp-146 is a binding site for NAD(+). The active site involves Arg-207. Asp-232 lines the NAD(+) pocket. Glu-237 is a catalytic residue. His-254 (proton donor) is an active-site residue. Position 257 (Gly-257) interacts with NAD(+). Tyr-258 contacts substrate.

This sequence belongs to the D-isomer specific 2-hydroxyacid dehydrogenase family. PdxB subfamily. Homodimer.

The protein localises to the cytoplasm. It catalyses the reaction 4-phospho-D-erythronate + NAD(+) = (R)-3-hydroxy-2-oxo-4-phosphooxybutanoate + NADH + H(+). It functions in the pathway cofactor biosynthesis; pyridoxine 5'-phosphate biosynthesis; pyridoxine 5'-phosphate from D-erythrose 4-phosphate: step 2/5. Its function is as follows. Catalyzes the oxidation of erythronate-4-phosphate to 3-hydroxy-2-oxo-4-phosphonooxybutanoate. This is Erythronate-4-phosphate dehydrogenase from Marinomonas sp. (strain MWYL1).